A 148-amino-acid chain; its full sequence is uncharacterized protein (148 aa).

An N-acetyltransferase domain is found at 8–148 (QVMQEPELKI…DGFLTLILRN (141 aa)).

Belongs to the acetyltransferase family.

This is an uncharacterized protein from Bacillus subtilis (strain 168).